The following is a 284-amino-acid chain: MRLQRQCIVVNMRSAIVLIMIFVLTGIRNSETASGGNQMDLSDSKGDHKDNSNASNGNGNANDNEVYVPPLVSSMVAKSGGGAGGLLDNITAYSSSSSSSSSNGNNNMLCPYDKETPCDRLQFPCIRCNYNHGCIYGRDLNVTCEVINNVQCLGERSFQRQMNCRYCYQTEMWQQSCGQRSSCNSATDKLFRTNCTVHHDVLCLGNRSFTRNLRCNWTQGYRWSTALLISLTLGGFGADRFYLGHWQEGIGKLFSFGGLGVWTIIDVLLISMHYLGPADGSLYI.

Residues 1-32 (MRLQRQCIVVNMRSAIVLIMIFVLTGIRNSET) form the signal peptide. The segment at 33–63 (ASGGNQMDLSDSKGDHKDNSNASNGNGNAND) is disordered. At 33–225 (ASGGNQMDLS…NWTQGYRWST (193 aa)) the chain is on the extracellular side. Basic and acidic residues predominate over residues 42–51 (SDSKGDHKDN). The segment covering 52–63 (SNASNGNGNAND) has biased composition (low complexity). N-linked (GlcNAc...) asparagine glycosylation is found at Asn53, Asn89, Asn141, Asn194, Asn206, and Asn216. Residues 220–267 (GYRWSTALLISLTLGGFGADRFYLGHWQEGIGKLFSFGGLGVWTIIDV) enclose the TM2 domain. Residues 226 to 246 (ALLISLTLGGFGADRFYLGHW) form a helical membrane-spanning segment. Residues 247–249 (QEG) are Cytoplasmic-facing. A helical membrane pass occupies residues 250-270 (IGKLFSFGGLGVWTIIDVLLI). Residues 271–284 (SMHYLGPADGSLYI) lie on the Extracellular side of the membrane.

Belongs to the TM2 family. In terms of tissue distribution, expressed in female ovary, mainly in nurse cells (at protein level). Expressed in the brain at low levels (at protein level).

The protein resides in the membrane. The protein localises to the vesicle. Its function is as follows. Positive regulator of Notch signaling during lateral inhibition and boundary formation. Interacts with Notch signaling at the membrane, at the level of gamma-secretase-mediated S3 cleavage. May regulate Notch signaling by regulating the subcellular localization of N/Notch in a context dependent manner. Maternal neurogenic factor involved in Notch signaling-dependent mesectodermal and neuroectodermal specification during early embryogenesis. Functions cooperatively with bisc/TM2D1 and amrt/TM2D2. Required for maintenance of neuronal function. Involved in imaginal specification of eyes and wings. This Drosophila melanogaster (Fruit fly) protein is TM2 domain-containing protein almondex.